The chain runs to 379 residues: Cytochrome b (379 aa).

Helical transmembrane passes span 33–53 (FGSL…FLAM), 77–98 (WLIR…FIHV), 113–133 (WNIG…GYVL), and 178–198 (FFAF…VHLL). Residues His83 and His97 each contribute to the heme b site. Heme b contacts are provided by His182 and His196. His201 serves as a coordination point for a ubiquinone. 4 helical membrane passes run 226 to 246 (TKDL…ALFF), 288 to 308 (LGGV…PLLN), 320 to 340 (VTQV…WIGG), and 347 to 367 (FTTI…ILIP).

Belongs to the cytochrome b family. In terms of assembly, the cytochrome bc1 complex contains 11 subunits: 3 respiratory subunits (MT-CYB, CYC1 and UQCRFS1), 2 core proteins (UQCRC1 and UQCRC2) and 6 low-molecular weight proteins (UQCRH/QCR6, UQCRB/QCR7, UQCRQ/QCR8, UQCR10/QCR9, UQCR11/QCR10 and a cleavage product of UQCRFS1). This cytochrome bc1 complex then forms a dimer. Heme b serves as cofactor.

Its subcellular location is the mitochondrion inner membrane. Component of the ubiquinol-cytochrome c reductase complex (complex III or cytochrome b-c1 complex) that is part of the mitochondrial respiratory chain. The b-c1 complex mediates electron transfer from ubiquinol to cytochrome c. Contributes to the generation of a proton gradient across the mitochondrial membrane that is then used for ATP synthesis. This chain is Cytochrome b (MT-CYB), found in Akodon paranaensis (Parana grass mouse).